The following is a 208-amino-acid chain: MKVIEVKHPLIQHKIGLMREADISTKRFREIAREVGSLLTYEATKNLELETVKIQGWNGEVEVQQIKGKKATVVPILRAGLGMMDGVLEHMPSAKISVVGIYRDEKTLEPVPYFQKLVSNIDERLAIVVDPMLATGGSMISTIDLIKKAGCTRIVVLVLVAAPEGLKALEAAHPDLEVYTASIDDHLDEQGYIVPGLGDAGDKIFGTK.

5-phospho-alpha-D-ribose 1-diphosphate is bound by residues arginine 78, arginine 103, and 130–138; that span reads DPMLATGGS. Residues isoleucine 193 and 198–200 contribute to the uracil site; that span reads GDA. 5-phospho-alpha-D-ribose 1-diphosphate is bound at residue aspartate 199.

This sequence belongs to the UPRTase family. Mg(2+) serves as cofactor.

The enzyme catalyses UMP + diphosphate = 5-phospho-alpha-D-ribose 1-diphosphate + uracil. It participates in pyrimidine metabolism; UMP biosynthesis via salvage pathway; UMP from uracil: step 1/1. Its activity is regulated as follows. Allosterically activated by GTP. Catalyzes the conversion of uracil and 5-phospho-alpha-D-ribose 1-diphosphate (PRPP) to UMP and diphosphate. This chain is Uracil phosphoribosyltransferase, found in Psychromonas ingrahamii (strain DSM 17664 / CCUG 51855 / 37).